Here is a 126-residue protein sequence, read N- to C-terminus: Small ribosomal subunit protein uS13 (126 aa).

Positions 95 to 126 (GMPVRGQRTRTNARTRRGRRGQAIGIKKKVKK) are disordered.

This sequence belongs to the universal ribosomal protein uS13 family. In terms of assembly, part of the 30S ribosomal subunit. Forms a loose heterodimer with protein S19. Forms two bridges to the 50S subunit in the 70S ribosome.

Located at the top of the head of the 30S subunit, it contacts several helices of the 16S rRNA. In the 70S ribosome it contacts the 23S rRNA (bridge B1a) and protein L5 of the 50S subunit (bridge B1b), connecting the 2 subunits; these bridges are implicated in subunit movement. Contacts the tRNAs in the A and P-sites. This Chloroflexus aggregans (strain MD-66 / DSM 9485) protein is Small ribosomal subunit protein uS13.